The chain runs to 314 residues: Coproporphyrin III ferrochelatase (314 aa).

2 residues coordinate Fe(2+): His186 and Glu268.

It belongs to the ferrochelatase family.

It is found in the cytoplasm. It carries out the reaction Fe-coproporphyrin III + 2 H(+) = coproporphyrin III + Fe(2+). It functions in the pathway porphyrin-containing compound metabolism; protoheme biosynthesis. Involved in coproporphyrin-dependent heme b biosynthesis. Catalyzes the insertion of ferrous iron into coproporphyrin III to form Fe-coproporphyrin III. The sequence is that of Coproporphyrin III ferrochelatase from Lactococcus lactis subsp. lactis (strain IL1403) (Streptococcus lactis).